We begin with the raw amino-acid sequence, 653 residues long: J protein JJJ2 (653 aa).

The region spanning 14–78 (TLYSVLNLKY…KEKMKYDSKL (65 aa)) is the J domain. Disordered stretches follow at residues 85–308 (DYSP…SSTE) and 490–512 (VSPKPRSVPSKTTPGSSHAEENL). Composition is skewed to polar residues over residues 161-171 (NAKSYQNSKKS) and 187-200 (ATSFSNENRNSSSV). The segment covering 213-241 (SGSAVGSESRISSSGSESSSNVNSATGSS) has biased composition (low complexity). The segment covering 298 to 308 (PVKTTPNSSTE) has biased composition (polar residues).

Its subcellular location is the cytoplasm. It is found in the nucleus. The polypeptide is J protein JJJ2 (JJJ2) (Kluyveromyces lactis (strain ATCC 8585 / CBS 2359 / DSM 70799 / NBRC 1267 / NRRL Y-1140 / WM37) (Yeast)).